Reading from the N-terminus, the 324-residue chain is Fibronectin type III domain-containing protein 8 (324 aa).

Residues 179 to 280 (PDTPFIFEHT…KPYKFATLAT (102 aa)) form the Fibronectin type-III domain.

The chain is Fibronectin type III domain-containing protein 8 (FNDC8) from Macaca fascicularis (Crab-eating macaque).